A 439-amino-acid chain; its full sequence is MALQNIGASNRDDAFYRYKMPRMMTKIEGRGNGIKTNVVNMVEIAKALGRPAAYTTKYFGCELGAQSKFDEKNGTSLVNGAHDTSKLAGLLENFIKKYVQCYGCGNPETEILITKTQMLQLKCAACGFLSDVDMRDKLTSFILKNPPEQKKSSKDKKSMRRAEKERLREGEAADEEMRKLKKEAASKKKAATTGTSKDKVSKKKDHSPPRSLSDENDQADSEEDDDDVQWQTDTSREAAEKRMKEQLSAVTAEMVMLSTVEEKKPVAEVKKAPEQVHENGNSKIPENAHEKLVNEIKELLSSGSSPTQLKTALASNSANPQEKMDALFSALFGGTGKGFAKEVIKKKKYLLALMMMQEEAGAPAQMGLLNGIESFCMKASAEAAKEVALVIKGLYDEDILDEDVIVEWYNKGVKSSPVLKNVTPFIEWLQNAESESEEE.

Residue 29 to 36 coordinates GTP; sequence GRGNGIKT. The tract at residues 143 to 245 is disordered; the sequence is LKNPPEQKKS…REAAEKRMKE (103 aa). Over residues 147–186 the composition is skewed to basic and acidic residues; that stretch reads PEQKKSSKDKKSMRRAEKERLREGEAADEEMRKLKKEAAS. Residues 214–228 are compositionally biased toward acidic residues; the sequence is DENDQADSEEDDDDV. Threonine 232 carries the post-translational modification Phosphothreonine. A compositionally biased stretch (basic and acidic residues) spans 234 to 245; that stretch reads TSREAAEKRMKE. Residues 283 to 439 enclose the W2 domain; the sequence is KIPENAHEKL…QNAESESEEE (157 aa). Phosphoserine is present on residues serine 434 and serine 436.

Belongs to the eIF-2-beta/eIF-5 family.

Its function is as follows. Catalyzes the hydrolysis of GTP bound to the 40S ribosomal initiation complex (40S.mRNA.Met-tRNA[F].eIF-2.GTP) with the subsequent joining of a 60S ribosomal subunit resulting in the release of eIF-2 and the guanine nucleotide. The subsequent joining of a 60S ribosomal subunit results in the formation of a functional 80S initiation complex (80S.mRNA.Met-tRNA[F]). This is Probable eukaryotic translation initiation factor 5-1 from Arabidopsis thaliana (Mouse-ear cress).